Here is a 400-residue protein sequence, read N- to C-terminus: Gap junction alpha-8 protein (400 aa).

An intramembrane segment occupies 2 to 12 (GDWSFLGNILE). The Cytoplasmic segment spans residues 13–21 (QVNEQSTVI). A helical transmembrane segment spans residues 22–42 (GRVWLTVLFIFRILILGTAAE). Topologically, residues 43 to 71 (LVWGDEQSDFVCNTQQPGCENVCYDEAFP) are extracellular. Disulfide bonds link Cys-54-Cys-196, Cys-61-Cys-190, and Cys-65-Cys-185. A helical membrane pass occupies residues 72–92 (ISHIRLWVLQIIFVSTPSLVY). The Cytoplasmic segment spans residues 93 to 156 (FGHAVHHVRM…GTLLRTYILH (64 aa)). Basic and acidic residues predominate over residues 104 to 118 (EKRKEREEAERRQQA). The disordered stretch occupies residues 104–139 (EKRKEREEAERRQQAEVDEEKLPLAPNQNKGNNPDG). A compositionally biased stretch (polar residues) spans 129 to 138 (PNQNKGNNPD). A helical transmembrane segment spans residues 157 to 177 (IIFKTLFEVGFIVGQYFLYGF). The Extracellular portion of the chain corresponds to 178-205 (RILPLYRCGRWPCPNLVDCFVSRPTEKT). The helical transmembrane segment at 206-226 (IFIMFMLVVAAVSLFLNLVEI) threads the bilayer. The Cytoplasmic portion of the chain corresponds to 227 to 400 (SHLILKRIRR…SRARSDDLTV (174 aa)). Residues 323–400 (YAQAKEPEEE…SRARSDDLTV (78 aa)) are disordered. The segment covering 327–336 (KEPEEEKVKA) has biased composition (basic and acidic residues). A compositionally biased stretch (acidic residues) spans 337 to 346 (EEEEEQEEEQ). Ser-364 bears the Phosphoserine; by CK2 mark. Residues 381 to 392 (RSLSRLSKASSR) show a composition bias toward low complexity.

This sequence belongs to the connexin family. Alpha-type (group II) subfamily. As to quaternary structure, a hemichannel or connexon is composed of a hexamer of connexins. A functional gap junction is formed by the apposition of two hemichannels. Forms heteromeric channels with GJA3. During early stages of lens development, interacts with the C-terminus of MIP. Post-translationally, proteolytically cleaved by caspase-3 during lens development. In terms of processing, phosphorylated on Ser-364; which inhibits cleavage by caspase-3.

Its subcellular location is the cell membrane. The protein localises to the cell junction. It localises to the gap junction. Its function is as follows. Structural component of eye lens gap junctions. Gap junctions are dodecameric channels that connect the cytoplasm of adjoining cells. They are formed by the docking of two hexameric hemichannels, one from each cell membrane. Small molecules and ions diffuse from one cell to a neighboring cell via the central pore. This chain is Gap junction alpha-8 protein (GJA8), found in Gallus gallus (Chicken).